The chain runs to 102 residues: Monothiol glutaredoxin-S7 (102 aa).

Residues 1–101 (MEKLQKMTSE…PMLKRVGALW (101 aa)) form the Glutaredoxin domain. Residue Cys21 participates in [2Fe-2S] cluster binding. The Responsive for interaction with TGA factors signature appears at 99–102 (ALWL).

The protein belongs to the glutaredoxin family. CC-type subfamily.

The protein resides in the cytoplasm. It localises to the nucleus. Its function is as follows. May only reduce GSH-thiol disulfides, but not protein disulfides. The chain is Monothiol glutaredoxin-S7 (GRXS7) from Arabidopsis thaliana (Mouse-ear cress).